Reading from the N-terminus, the 432-residue chain is 3-phosphoshikimate 1-carboxyvinyltransferase (432 aa).

K23, S24, and R28 together coordinate 3-phosphoshikimate. Phosphoenolpyruvate is bound at residue K23. Phosphoenolpyruvate is bound by residues G95 and R123. 3-phosphoshikimate-binding residues include S167, Q169, D317, and K344. Q169 serves as a coordination point for phosphoenolpyruvate. Residue D317 is the Proton acceptor of the active site. Phosphoenolpyruvate-binding residues include R348 and R390.

It belongs to the EPSP synthase family. As to quaternary structure, monomer.

The protein resides in the cytoplasm. The enzyme catalyses 3-phosphoshikimate + phosphoenolpyruvate = 5-O-(1-carboxyvinyl)-3-phosphoshikimate + phosphate. The protein operates within metabolic intermediate biosynthesis; chorismate biosynthesis; chorismate from D-erythrose 4-phosphate and phosphoenolpyruvate: step 6/7. In terms of biological role, catalyzes the transfer of the enolpyruvyl moiety of phosphoenolpyruvate (PEP) to the 5-hydroxyl of shikimate-3-phosphate (S3P) to produce enolpyruvyl shikimate-3-phosphate and inorganic phosphate. This is 3-phosphoshikimate 1-carboxyvinyltransferase from Staphylococcus aureus (strain Newman).